The primary structure comprises 2542 residues: Zinc finger FYVE domain-containing protein 26 (2542 aa).

Disordered stretches follow at residues 591-658 and 740-811; these read HLPE…GPHT and VTSN…QVEA. A phosphoserine mark is found at S612 and S616. A compositionally biased stretch (basic residues) spans 752-772; the sequence is RRYRPTAKRHSSLRRGRRTRR. The span at 785-803 shows a compositional bias: low complexity; sequence SLEGTSSELSTSTSEGSLS. The residue at position 798 (S798) is a Phosphoserine. Residues 866 to 891 are a coiled coil; that stretch reads MFVERYQEVIQELARVEHKIENQNSD. Positions 1273-1292 are disordered; that stretch reads SPRPSENPSAERKSDSSPKD. Over residues 1281–1290 the composition is skewed to basic and acidic residues; it reads SAERKSDSSP. Positions 1495–1522 form a coiled coil; it reads VSDMAVPEELKSELQRKLTELRVYQKIL. A phosphoserine mark is found at S1739, S1761, S1783, and S1785. The segment at 1746 to 1807 is disordered; that stretch reads PVHQASDPET…LEFVPPETPP (62 aa). Low complexity predominate over residues 1757-1779; it reads SRSSSAEFSAAAAAPAPAAPGSA. The FYVE-type zinc-finger motif lies at 1815–1875; that stretch reads DETESMCMVC…VCDQCYSYYN (61 aa). Zn(2+) is bound by residues C1821, C1824, C1838, C1841, C1846, C1849, C1867, and C1870.

The protein belongs to the ZFYVE26 family. As to quaternary structure, interacts with AP5Z1, AP5B1, AP5S1 and SPG11. Interacts with TTC19 and KIF13A.

The protein localises to the cytoplasm. It localises to the cytoskeleton. The protein resides in the microtubule organizing center. It is found in the centrosome. Its subcellular location is the midbody. Functionally, phosphatidylinositol 3-phosphate-binding protein required for the abscission step in cytokinesis: recruited to the midbody during cytokinesis and acts as a regulator of abscission. May also be required for efficient homologous recombination DNA double-strand break repair. The polypeptide is Zinc finger FYVE domain-containing protein 26 (Zfyve26) (Rattus norvegicus (Rat)).